The chain runs to 126 residues: Acidic phospholipase A2 4 (126 aa).

Ser-1 is a signal peptide. Positions 2 to 7 (NRPMPL) are excised as a propeptide. Intrachain disulfides connect Cys-18–Cys-78, Cys-33–Cys-125, Cys-35–Cys-51, Cys-50–Cys-106, Cys-57–Cys-99, Cys-67–Cys-92, and Cys-85–Cys-97. Residues Tyr-34, Gly-36, and Gly-38 each coordinate Ca(2+). His-54 is a catalytic residue. Residue Asp-55 coordinates Ca(2+). The active site involves Asp-100.

Belongs to the phospholipase A2 family. Group I subfamily. D49 sub-subfamily. As to quaternary structure, monomer. Requires Ca(2+) as cofactor. As to expression, expressed by the venom gland.

The protein resides in the secreted. The catalysed reaction is a 1,2-diacyl-sn-glycero-3-phosphocholine + H2O = a 1-acyl-sn-glycero-3-phosphocholine + a fatty acid + H(+). Functionally, snake venom phospholipase A2 (PLA2) that exhibits strong anticoagulant activity, which is not due to the catalytic activity. PLA2 catalyzes the calcium-dependent hydrolysis of the 2-acyl groups in 3-sn-phosphoglycerides. The polypeptide is Acidic phospholipase A2 4 (Naja sagittifera (Andaman cobra)).